The sequence spans 101 residues: Small ribosomal subunit protein uS14 (101 aa).

This sequence belongs to the universal ribosomal protein uS14 family. Part of the 30S ribosomal subunit. Contacts proteins S3 and S10.

Binds 16S rRNA, required for the assembly of 30S particles and may also be responsible for determining the conformation of the 16S rRNA at the A site. This Hahella chejuensis (strain KCTC 2396) protein is Small ribosomal subunit protein uS14.